The sequence spans 1240 residues: MPPNSKSKRRKNKSKQHNKKNGNSDPEQSINPTQLVPRMEPELYHTESDYPTSRVIKRAPNGDVIVEPINTDDDKKERTANLTHNKDSMDSASSLAFTLDSHWESLSPEEKKTILRIEKEEVFNVIRNYQDDHSCSCSVCGRRHLAMDQEMERIYNTLYAMDKDKDPETNPIKFHLGIIKELQISKNQQQNDLSSTKGEVVKNFLSSSTVGSLKEEVLHFKQKQLSKQEQAHNETADNTSLLEENLNNIHINKTSSEISANFNSVSDEELQQKYSNFTKTFISSHPKIAEEYVQKMMMYPNIRALTDDLMNSNGQGFLNAIEDFVRDGQIQASKKDDSITEDEASSTDLTDPKEFTTMLHSGKPLTEDEYADLQRNIAERMTNAYDTASKKFKDVSQLEKELFTRFMSGRDKKSFRELIIQSFKNKFDGELGPSVLAATLSSCFSSQSKDTSLDTDSIYEDEDEEDYDDYSEYAEDSEEVSEYEGIEAVEKPEHDEKSNGIRETLHLSYDHDHKRQNHPHHHYHSTSTHSEDELSEEEYISDIELPHDPHKHFHRDDDILDGDEDEPEEEDENEGDDEEDTYDSGLDETDRLEEGRKLIQIAITKLLQSRIMASYHEKQADNNRLKLLQELEEEKRKKREKEEKKQKKREKEKEKKRLQQLAKEEEKRKREEEKERLKKELEEREMRRREAQRKKVEEAKRKKDEERKRRLEEQQRREEMQEKQRKQKEELKRKREEEKKRIREQKRLEQEKLQKEKEEEERQRLIAEDALRKQKLNEEQTSANILSAKPFTENGVGNPVSSQSHPNMTNYQEDNSCSINDEILKMVNSVAASKPVSPTGFNVHDLLLPSTNNQMPAMEQSHLSQPGNQNNHFGTTTIPNALDLATKSSLQTENNYLMNSQTLENTSLLMHNNSSPTKLLPNDFGLSSWGGLTNTMSINPTCKPPVIQTSEMKSQAHKSSPQATMPSFGLPNGGTHRKSFTDELNTLTSMLSSSGFADTSLSSSGFPPSQRSVWNDQKSSFSGPSTAGNFNNSSIQSGMLLAPTLGSVESFPNRTSIWDSSTTPMMNKSELSGRNITSTAQDSPAFMASNIWSSNSQYNSPYLTSNVLQSPQISSGVDESHILDSIYNTYLAISPQDSLNPYIAIGTLFQNLVGLNLDYSTFINKLISMQGAYNCEFFTDNNGSITHVRFARQTPAGHSKGLLNQLFSGLNDPTATPFTSRPHTSTGASFPIASSTTQTS.

Over residues Met1 to Lys20 the composition is skewed to basic residues. The tract at residues Met1–Lys76 is disordered. A compositionally biased stretch (polar residues) spans Asp25–Gln34. A compositionally biased stretch (basic and acidic residues) spans Met39 to Ser48. Ser266 is subject to Phosphoserine. Disordered stretches follow at residues Ser446 to Glu593, Glu634 to Glu744, Lys953 to Phe980, Asp998 to Asn1029, and Thr1214 to Ser1240. Acidic residues predominate over residues Ser457–Glu487. Residues Ala488–His513 are compositionally biased toward basic and acidic residues. A compositionally biased stretch (basic residues) spans Lys514 to His524. The segment covering Asp558–Asp587 has biased composition (acidic residues). Residues His616 to Asn777 adopt a coiled-coil conformation. A compositionally biased stretch (polar residues) spans Lys953–Met965.

Belongs to the NST1 family. As to quaternary structure, interacts with MSL1.

It localises to the cytoplasm. With MSL1, acts as a negative regulator of salt tolerance. The protein is Stress response protein NST1 (NST1) of Saccharomyces cerevisiae (strain YJM789) (Baker's yeast).